The following is a 212-amino-acid chain: Ribonuclease HII (212 aa).

In terms of domain architecture, RNase H type-2 spans methionine 1–glutamine 206. Aspartate 7, glutamate 8, and aspartate 100 together coordinate a divalent metal cation.

The protein belongs to the RNase HII family. Requires Mn(2+) as cofactor. Mg(2+) is required as a cofactor.

The protein localises to the cytoplasm. It catalyses the reaction Endonucleolytic cleavage to 5'-phosphomonoester.. Functionally, endonuclease that specifically degrades the RNA of RNA-DNA hybrids. The sequence is that of Ribonuclease HII from Halobacterium salinarum (strain ATCC 29341 / DSM 671 / R1).